A 440-amino-acid polypeptide reads, in one-letter code: Proline--tRNA ligase (440 aa).

This sequence belongs to the class-II aminoacyl-tRNA synthetase family. ProS type 2 subfamily. In terms of assembly, homodimer.

The protein localises to the cytoplasm. It catalyses the reaction tRNA(Pro) + L-proline + ATP = L-prolyl-tRNA(Pro) + AMP + diphosphate. In terms of biological role, catalyzes the attachment of proline to tRNA(Pro) in a two-step reaction: proline is first activated by ATP to form Pro-AMP and then transferred to the acceptor end of tRNA(Pro). The sequence is that of Proline--tRNA ligase from Rhizobium etli (strain ATCC 51251 / DSM 11541 / JCM 21823 / NBRC 15573 / CFN 42).